We begin with the raw amino-acid sequence, 65 residues long: MTKSAELRQKDVAGLEAEIKSLQKAHFGLRMQKATQQLGNTATLKATRRDIARAKTILAEKQAAK.

This sequence belongs to the universal ribosomal protein uL29 family.

The chain is Large ribosomal subunit protein uL29 from Acidovorax ebreus (strain TPSY) (Diaphorobacter sp. (strain TPSY)).